A 242-amino-acid chain; its full sequence is Ferritin, mitochondrial (242 aa).

A mitochondrion-targeting transit peptide spans 1 to 49; that stretch reads MLSCFRLLSRHISPSLASLRPVRCCFALPLRWAPGRPLDPRQIAPRRPL. The span at 47–58 shows a compositional bias: low complexity; that stretch reads RPLAAAASSRDP. The tract at residues 47–71 is disordered; sequence RPLAAAASSRDPTGPAAGPSRVRQN. The region spanning 70 to 219 is the Ferritin-like diiron domain; the sequence is QNFHPDSEAA…DHVHNLVKMG (150 aa). Glutamate 87, glutamate 122, histidine 125, glutamate 167, and glutamine 201 together coordinate Fe cation.

The protein belongs to the ferritin family. Homooligomer of 24 subunits. The functional molecule is roughly spherical and contains a central cavity into which the polymeric mineral iron core is deposited. Detected in testis and erythroleukemia. Expression is very low or not detectable in brain, colon, heart, kidney, liver, lung, muscle, placental, spleen and small intestine.

The protein localises to the mitochondrion. The catalysed reaction is 4 Fe(2+) + O2 + 4 H(+) = 4 Fe(3+) + 2 H2O. Catalyzes the oxidation of ferrous iron(II) to ferric iron(III) and stores iron in a soluble, non-toxic, readily available form. Important for iron homeostasis. Iron is taken up in the ferrous form and deposited as ferric hydroxides after oxidation. In Homo sapiens (Human), this protein is Ferritin, mitochondrial.